Consider the following 571-residue polypeptide: La-related protein 7 (571 aa).

Residue Met1 is modified to N-acetylmethionine. Positions 1–17 (METENQKTMEESTEKRK) are enriched in basic and acidic residues. Disordered regions lie at residues 1–25 (METE…KRSR) and 181–366 (LNNP…ERHK). Residues 23–117 (RSRVKQVLAD…KPLGERPKDE (95 aa)) form the HTH La-type RNA-binding domain. Residues 120-198 (RTVYVELLPK…PRKPGIFPKT (79 aa)) enclose the RRM domain. Over residues 214–223 (KKKKKKKGRI) the composition is skewed to basic residues. Lys232 is covalently cross-linked (Glycyl lysine isopeptide (Lys-Gly) (interchain with G-Cter in SUMO2)). Thr252 bears the Phosphothreonine mark. 2 positions are modified to phosphoserine: Ser254 and Ser257. Thr261 is subject to Phosphothreonine. Residues 287–296 (KAGKRERSSA) show a composition bias toward basic and acidic residues. 3 positions are modified to phosphoserine: Ser294, Ser295, and Ser335. Thr336 is modified (phosphothreonine). The segment covering 342 to 351 (PGDRKGDSLS) has biased composition (basic and acidic residues). Ser349 carries the post-translational modification Phosphoserine. Positions 352-365 (KGKRKHKKKHKERH) are enriched in basic residues. Lys408 is covalently cross-linked (Glycyl lysine isopeptide (Lys-Gly) (interchain with G-Cter in SUMO2)). Positions 411-432 (SEMETESKAPPGSGQQCSTQEK) are disordered. Residues 423-432 (SGQQCSTQEK) show a composition bias toward polar residues. The xRRM domain occupies 439–552 (QFVTGVIVKI…TEKLITKAEK (114 aa)).

This sequence belongs to the LARP7 family. As to quaternary structure, core component of the 7SK RNP complex, at least composed of 7SK RNA, LARP7, MEPCE, HEXIM1 (or HEXIM2) and P-TEFb (composed of CDK9 and CCNT1/cyclin-T1). Interacts with METTL16. Interacts with RBM7; upon genotoxic stress this interaction is enhanced, triggering the release of inactive P-TEFb complex from the core, yielding to P-TEFb complex activation. Associates with box C/D small nucleolar ribonucleoprotein (snoRNP) complexes.

It is found in the nucleus. It localises to the nucleoplasm. In terms of biological role, RNA-binding protein that specifically binds distinct small nuclear RNA (snRNAs) and regulates their processing and function. Specifically binds the 7SK snRNA (7SK RNA) and acts as a core component of the 7SK ribonucleoprotein (RNP) complex, thereby acting as a negative regulator of transcription elongation by RNA polymerase II. The 7SK RNP complex sequesters the positive transcription elongation factor b (P-TEFb) in a large inactive 7SK RNP complex preventing RNA polymerase II phosphorylation and subsequent transcriptional elongation. The 7SK RNP complex also promotes snRNA gene transcription by RNA polymerase II via interaction with the little elongation complex (LEC). LARP7 specifically binds to the highly conserved 3'-terminal U-rich stretch of 7SK RNA; on stimulation, remains associated with 7SK RNA, whereas P-TEFb is released from the complex. LARP7 also acts as a regulator of mRNA splicing fidelity by promoting U6 snRNA processing. Specifically binds U6 snRNAs and associates with a subset of box C/D RNP complexes: promotes U6 snRNA 2'-O-methylation by facilitating U6 snRNA loading into box C/D RNP complexes. U6 snRNA 2'-O-methylation is required for mRNA splicing fidelity. Binds U6 snRNAs with a 5'-CAGGG-3' sequence motif. U6 snRNA processing is required for spermatogenesis. In Rattus norvegicus (Rat), this protein is La-related protein 7.